The sequence spans 284 residues: Acetyl-coenzyme A carboxylase carboxyl transferase subunit beta (284 aa).

Positions 24–284 (GLWYKSPTGK…LDLILNNEVR (261 aa)) constitute a CoA carboxyltransferase N-terminal domain.

This sequence belongs to the AccD/PCCB family. Acetyl-CoA carboxylase is a heterohexamer composed of biotin carboxyl carrier protein (AccB), biotin carboxylase (AccC) and two subunits each of ACCase subunit alpha (AccA) and ACCase subunit beta (AccD).

The protein localises to the cytoplasm. The enzyme catalyses N(6)-carboxybiotinyl-L-lysyl-[protein] + acetyl-CoA = N(6)-biotinyl-L-lysyl-[protein] + malonyl-CoA. The protein operates within lipid metabolism; malonyl-CoA biosynthesis; malonyl-CoA from acetyl-CoA: step 1/1. In terms of biological role, component of the acetyl coenzyme A carboxylase (ACC) complex. Biotin carboxylase (BC) catalyzes the carboxylation of biotin on its carrier protein (BCCP) and then the CO(2) group is transferred by the transcarboxylase to acetyl-CoA to form malonyl-CoA. This chain is Acetyl-coenzyme A carboxylase carboxyl transferase subunit beta, found in Flavobacterium psychrophilum (strain ATCC 49511 / DSM 21280 / CIP 103535 / JIP02/86).